We begin with the raw amino-acid sequence, 267 residues long: 2-keto-3-deoxy-L-rhamnonate aldolase (267 aa).

The active-site Proton acceptor is His49. Residue Gln151 participates in substrate binding. Glu153 lines the Mg(2+) pocket. Residues Ala178 and Asp179 each contribute to the substrate site. Mg(2+) is bound at residue Asp179.

The protein belongs to the HpcH/HpaI aldolase family. KDR aldolase subfamily. In terms of assembly, homohexamer. The cofactor is Mg(2+). Requires Ni(2+) as cofactor.

It catalyses the reaction 2-dehydro-3-deoxy-L-rhamnonate = (S)-lactaldehyde + pyruvate. It carries out the reaction D-glyceraldehyde + 3-hydroxypyruvate = (3R,4S,5R)-3,4,5,6-tetrahydroxy-2-oxohexanoate. The catalysed reaction is D-glyceraldehyde + 3-hydroxypyruvate = 2-dehydro-D-gluconate. The enzyme catalyses D-glyceraldehyde + 3-hydroxypyruvate = 2-dehydro-D-galactonate. It catalyses the reaction D-glyceraldehyde + pyruvate = 2-dehydro-3-deoxy-L-galactonate. It carries out the reaction 2-dehydro-3-deoxy-D-gluconate = D-glyceraldehyde + pyruvate. Catalyzes the reversible retro-aldol cleavage of 2-keto-3-deoxy-L-rhamnonate (KDR) to pyruvate and lactaldehyde. 2-keto-3-deoxy-L-mannonate, 2-keto-3-deoxy-L-lyxonate and 4-hydroxy-2-ketoheptane-1,7-dioate (HKHD) are also reasonably good substrates, although 2-keto-3-deoxy-L-rhamnonate is likely to be the physiological substrate. In vitro, can catalyze the aldolisation reaction between hydroxypyruvate (HPA) or pyruvate (PA) and D-glyceraldehyde (D-GA). The condensation of hydroxypyruvate and D-glyceraldehyde produces (3R,4S,5R)-3,4,5,6-tetrahydroxy-2-oxohexanoate as the major product, 2-dehydro-D-gluconate and 2-dehydro-D-galactonate. The condensation of pyruvate and D-glyceraldehyde produces 2-dehydro-3-deoxy-L-galactonate as the major product and 2-dehydro-3-deoxy-D-gluconate. This chain is 2-keto-3-deoxy-L-rhamnonate aldolase (rhmA), found in Escherichia coli (strain K12).